The primary structure comprises 302 residues: Ornithine carbamoyltransferase (302 aa).

Carbamoyl phosphate-binding positions include 53 to 56 (STRT), Gln80, Arg104, and 131 to 134 (HPCQ). L-ornithine-binding positions include Asn162, Asp219, and 223–224 (SM). Carbamoyl phosphate is bound by residues 259 to 260 (CL) and Arg287.

Belongs to the aspartate/ornithine carbamoyltransferase superfamily. OTCase family.

Its subcellular location is the cytoplasm. It catalyses the reaction carbamoyl phosphate + L-ornithine = L-citrulline + phosphate + H(+). Its pathway is amino-acid biosynthesis; L-arginine biosynthesis; L-arginine from L-ornithine and carbamoyl phosphate: step 1/3. Functionally, reversibly catalyzes the transfer of the carbamoyl group from carbamoyl phosphate (CP) to the N(epsilon) atom of ornithine (ORN) to produce L-citrulline. The sequence is that of Ornithine carbamoyltransferase from Hydrogenovibrio crunogenus (strain DSM 25203 / XCL-2) (Thiomicrospira crunogena).